A 264-amino-acid polypeptide reads, in one-letter code: Small ribosomal subunit protein uS2 (264 aa).

This sequence belongs to the universal ribosomal protein uS2 family.

This is Small ribosomal subunit protein uS2 (rpsB) from Helicobacter pylori (strain ATCC 700392 / 26695) (Campylobacter pylori).